A 157-amino-acid polypeptide reads, in one-letter code: Phosphopantetheine adenylyltransferase (157 aa).

Residue Ser8 participates in substrate binding. ATP is bound by residues 8 to 9 (SF) and His16. Substrate is bound by residues Lys40, Thr72, and Arg86. ATP is bound by residues 87 to 89 (GLR), Glu97, and 122 to 128 (YSFLSSS).

Belongs to the bacterial CoaD family. In terms of assembly, homohexamer. Mg(2+) serves as cofactor.

It is found in the cytoplasm. The enzyme catalyses (R)-4'-phosphopantetheine + ATP + H(+) = 3'-dephospho-CoA + diphosphate. The protein operates within cofactor biosynthesis; coenzyme A biosynthesis; CoA from (R)-pantothenate: step 4/5. Reversibly transfers an adenylyl group from ATP to 4'-phosphopantetheine, yielding dephospho-CoA (dPCoA) and pyrophosphate. The protein is Phosphopantetheine adenylyltransferase of Crocosphaera subtropica (strain ATCC 51142 / BH68) (Cyanothece sp. (strain ATCC 51142)).